The primary structure comprises 690 residues: Polyribonucleotide nucleotidyltransferase (690 aa).

Mg(2+) is bound by residues aspartate 483 and aspartate 489. A KH domain is found at 550 to 609 (PKMEQITVDKKDIAAVIGKGGATIREIVEKSGAKLDVNDEGVVTVAAPDEESRNIAMQMI). One can recognise an S1 motif domain in the interval 619–686 (NKIYSGKVMK…DRGKVKLSMK (68 aa)).

Belongs to the polyribonucleotide nucleotidyltransferase family. Mg(2+) serves as cofactor.

The protein resides in the cytoplasm. It catalyses the reaction RNA(n+1) + phosphate = RNA(n) + a ribonucleoside 5'-diphosphate. Involved in mRNA degradation. Catalyzes the phosphorolysis of single-stranded polyribonucleotides processively in the 3'- to 5'-direction. The sequence is that of Polyribonucleotide nucleotidyltransferase from Pelagibacter ubique (strain HTCC1062).